The chain runs to 188 residues: Phosphatidylinositol N-acetylglucosaminyltransferase subunit H (188 aa).

Belongs to the PIGH family. Component of the glycosylphosphatidylinositol-N-acetylglucosaminyltransferase (GPI-GnT) complex composed at least by PIGA, PIGC, PIGH, PIGP, PIGQ, PIGY and DPM2. Interacts with PIGQ.

The protein resides in the cytoplasm. The protein operates within glycolipid biosynthesis; glycosylphosphatidylinositol-anchor biosynthesis. Its function is as follows. Part of the glycosylphosphatidylinositol-N-acetylglucosaminyltransferase (GPI-GnT) complex that catalyzes the transfer of N-acetylglucosamine from UDP-N-acetylglucosamine to phosphatidylinositol and participates in the first step of GPI biosynthesis. This chain is Phosphatidylinositol N-acetylglucosaminyltransferase subunit H, found in Homo sapiens (Human).